Here is a 1010-residue protein sequence, read N- to C-terminus: Lethal(2) giant larvae protein homolog SRO77 (1010 aa).

WD repeat units follow at residues 47-80 (TVTT…VVFT), 87-122 (IKHM…TTVF), 127-163 (ITCI…KLKI), 182-215 (SIQW…KQHF), 240-275 (VIQS…IHAR), 299-364 (AIFK…QKLF), 372-407 (LINF…ETLI), 431-504 (VTTC…FEVN), 518-595 (KNIS…STVI), 602-637 (VSAI…FNEN), 649-700 (VSTV…DATK), 709-763 (GINS…THAL), 768-815 (IATS…KNLR), and 829-852 (SILE…SVLN). Residues 932–958 (SNAARKLPPGTEDHRYARPVRSSGRSN) form a disordered region.

This sequence belongs to the WD repeat L(2)GL family. Interacts with SEC9.

Acts as an allosteric regulator of polarized exocytosis by promoting the targeted fusion of vesicles with the plasma membrane. Involved in maintenance of ion homeostasis in cells exposed to NaCl stress. May be involved in the targeting of the myosin proteins to their intrinsic pathways. Multicopy suppressor of RHO3. May also participate in the maintenance of cell polarity and bud growth. This Saccharomyces cerevisiae (strain ATCC 204508 / S288c) (Baker's yeast) protein is Lethal(2) giant larvae protein homolog SRO77 (SRO77).